Here is a 280-residue protein sequence, read N- to C-terminus: Protein HEAT-INDUCED TAS1 TARGET 4 (280 aa).

The protein belongs to the heat induced plant HTT protein family. As to expression, expressed in seedlings, leaves, stems, inflorescences and siliques.

It is found in the cytoplasm. Its subcellular location is the nucleus. Mediates both basal and acquired thermotolerance. The chain is Protein HEAT-INDUCED TAS1 TARGET 4 from Arabidopsis thaliana (Mouse-ear cress).